The chain runs to 193 residues: Adenylate kinase (193 aa).

10–18 (GVPGVGGTT) is a binding site for ATP.

It belongs to the archaeal adenylate kinase family. As to quaternary structure, monomer.

The protein localises to the cytoplasm. It catalyses the reaction AMP + ATP = 2 ADP. This is Adenylate kinase from Methanococcus aeolicus (strain ATCC BAA-1280 / DSM 17508 / OCM 812 / Nankai-3).